The primary structure comprises 1896 residues: MHSRILFKGTAAAVAARRIRHILGPLMSKEGWNCSAHEVKLLNTSSGDTVKIGEISYVLKTPKNPELVPVNHMMEALPQMVTQHLRWIMQKDLLGQDVFLIGPPGPLRRSIAMQYLELTKREVEYVALSRDTTETDLKQRREIRSGTAFYIDQCAVRAATEGRILVLEGLEKAERNVLPVLNNLLENREMQLEDGRFLMSAHRYDKLLEEHTKEELDAWKIVRVSEDFRVIALGLPVPRYKGNPLDPPLRSRFQARDIYYLPFKDQLEHLYRIGANVSAERVSQLLSFATTLCSQESASLSLPDFPVDNLPSALTVLNLFPMLSVQQLVQRLYPYEAMLGKEGRTAVEGVLNRFELTDGSTKPSPTAVVNIEPVNGGQAEQAAVTLNITNQKITFQVPSGTRPIRPPNSSPTFINTPTHERLLAEMMQSHLVKDICLIGAKGCGKSVIAREFAEMLGYSIEPVMLYQDMTARDLLQQRYTLPNGDTAWRASPLVTAAQEGKLVLLDGIHRVNLGTLAVLSRLLHDRELDLYDGTRLLRFDRYQALKEELQLTDQQLQDRSIFPIHPSFRIIALAEPPVIGSTTQQWLNPEILTMFLFHTIKPLAKAEETAVLQGMIPNVPGEAVEQLQHLTHSLRKSNDPTALSLASSLSTRQLLRICRRLSQYPQESVAHAVHKACLSRFLPSLARSSLEKSLANCSIEDHPDPASEQKQLYTCTVKDGLLTIGNVSAPVYSPDEKMKVPDVLFYENVQHMMVMQDMLKDFLLGEHLLLVGNQGVGKNKIVDRFLHLMNRPREYLQLHRDTTVQTLTLQPSVRDGIIIYEDSPLVKAVKMGHILVIDEADKAPTNVTCILKALVESGEMILADGRRIVSDALEAAGRPNAIPMHPDFRMIVLANRPGFPFLGNDFFGALGDIFSCHAVDNPKPQAEFAMLKQYGPDVPDAVLQKLVAAFGELRAMADQGTITYPYSTREVVNIVKHLQKFPDEGLANVVRNVFDFDSYNKDMREVLISALHKHGIPIGAKPTSVHLAKELPLPDCKMTGYWTISQGGNTRRKLLCPTETHRIDIKGPVFLRVQSYPSKRHESRSLSFTEEQAHWQIPMNEVNIVCDVTTAKDSIYVATCNPVSLYAMKEKGDSVQCIELYDIFPRTISGVWQPFVSVAALGNPLQDQVVLHEEQGNTVLHLDLVTGAVRRLILSQDKQDEAPRKTSNWWNSKESQPGYKMCKEFAHKNWLLFYKENGNQLDVVDVLEGQVHTIHLPINLKAVFLVAEDRWLLVESKTDRKFLLTKPMHMGAEETGVCQLHAISEDAVSSGFGNNSGMEAVSPQEVSSDQLSNENLSAALGQKIVSPNRILCDTNTYANVIVGFPDLMSPNELYSFRRSLPITESRRPDMFFGSSKRTGPAKRVNCVCLLDANQVVRALPPTQVPLAEVYPKDVTPPMSAAYLEVTDLNSKRLKYIPVPRSNSMSPYTVWISKVSDTDVVMAPLGSGGVVTVDMGGYVRLWETGLDHLQRSLLEWRNMIGSEDGRPVQITIERDSGLDVSSPKHGKIDAKNAPHVGGNQWAGGTGGRDTAGLGGKGGPYRLDAGHKVYQISQAEKDAVPDEVKRAARDMAEQAFKQRLKEIEMSEYDASTYDRFSGAVRRQVQSLRIILDSLQAKGKERQWLRNQALGELDDAKIIDGLTGEKSIYKRRGELEPELGSPQQKPKRLRVLADVSGSMYRFNGVDGRLERSMEAVCMVMEALESYEHKFKYDITGHSGDGFDIELVRCDKVPKNNKERLKVLKTMHAHSQFCMSGDYTLEGTEHAIRELAHEEADEHFVIVLSDANLERYGISPDRFARVLTSNPQVNAFAIFIGSLGDQADRLQKTLPAGRSFVAMDTKEIPQILQQIFTSTMLSSA.

Residues 1–18 constitute a mitochondrion transit peptide; it reads MHSRILFKGTAAAVAARR. 439-446 lines the ATP pocket; sequence GAKGCGKS. The disordered stretch occupies residues 1536 to 1564; the sequence is GLDVSSPKHGKIDAKNAPHVGGNQWAGGT. The VWFA domain maps to 1705–1887; that stretch reads RLRVLADVSG…KEIPQILQQI (183 aa).

In terms of assembly, monomer.

It localises to the mitochondrion. Exhibits ATPase activity in vitro. The sequence is that of von Willebrand factor A domain-containing protein 8 (vwa8) from Danio rerio (Zebrafish).